We begin with the raw amino-acid sequence, 332 residues long: Glycerol-3-phosphate dehydrogenase [NAD(P)+] (332 aa).

Positions 13, 33, and 107 each coordinate NADPH. Residues Lys107, Gly136, and Ser138 each coordinate sn-glycerol 3-phosphate. Residue Ala140 coordinates NADPH. Residues Lys191, Asp244, Ser254, Arg255, and Asn256 each coordinate sn-glycerol 3-phosphate. Catalysis depends on Lys191, which acts as the Proton acceptor. Arg255 is a binding site for NADPH. Glu280 serves as a coordination point for NADPH.

The protein belongs to the NAD-dependent glycerol-3-phosphate dehydrogenase family.

It is found in the cytoplasm. The catalysed reaction is sn-glycerol 3-phosphate + NAD(+) = dihydroxyacetone phosphate + NADH + H(+). It catalyses the reaction sn-glycerol 3-phosphate + NADP(+) = dihydroxyacetone phosphate + NADPH + H(+). It participates in membrane lipid metabolism; glycerophospholipid metabolism. Its function is as follows. Catalyzes the reduction of the glycolytic intermediate dihydroxyacetone phosphate (DHAP) to sn-glycerol 3-phosphate (G3P), the key precursor for phospholipid synthesis. The protein is Glycerol-3-phosphate dehydrogenase [NAD(P)+] of Alkalilimnicola ehrlichii (strain ATCC BAA-1101 / DSM 17681 / MLHE-1).